A 180-amino-acid polypeptide reads, in one-letter code: MSIEVSNESGMDISEPELISVARFVIARMDVHPAAELSMVLVDSATMADLHVRWMDLPGPTDVMSFPMDELEPGGRPDSPEPGPSMLGDIVLCPSFAADQADKAGHSLAHELALLTVHGVLHLLGYDHAEPEEEKEMFGLQNSLLEEWYEDLRRIDREAALAERDQKLLGKTGFVDGVDR.

The Zn(2+) site is built by histidine 118, histidine 122, and histidine 128.

This sequence belongs to the endoribonuclease YbeY family. It depends on Zn(2+) as a cofactor.

The protein resides in the cytoplasm. In terms of biological role, single strand-specific metallo-endoribonuclease involved in late-stage 70S ribosome quality control and in maturation of the 3' terminus of the 16S rRNA. The protein is Endoribonuclease YbeY of Rhodococcus erythropolis (strain PR4 / NBRC 100887).